Consider the following 188-residue polypeptide: Elongation factor P (188 aa).

At lysine 34 the chain carries N6-(3,6-diaminohexanoyl)-5-hydroxylysine.

The protein belongs to the elongation factor P family. In terms of processing, may be beta-lysylated on the epsilon-amino group of Lys-34 by the combined action of EpmA and EpmB, and then hydroxylated on the C5 position of the same residue by EpmC (if this protein is present). Lysylation is critical for the stimulatory effect of EF-P on peptide-bond formation. The lysylation moiety may extend toward the peptidyltransferase center and stabilize the terminal 3-CCA end of the tRNA. Hydroxylation of the C5 position on Lys-34 may allow additional potential stabilizing hydrogen-bond interactions with the P-tRNA.

Its subcellular location is the cytoplasm. The protein operates within protein biosynthesis; polypeptide chain elongation. Its function is as follows. Involved in peptide bond synthesis. Alleviates ribosome stalling that occurs when 3 or more consecutive Pro residues or the sequence PPG is present in a protein, possibly by augmenting the peptidyl transferase activity of the ribosome. Modification of Lys-34 is required for alleviation. The protein is Elongation factor P of Haemophilus influenzae (strain 86-028NP).